We begin with the raw amino-acid sequence, 228 residues long: 3,4-dihydroxy-2-butanone 4-phosphate synthase (228 aa).

Residues 37–38 (RE), D42, 150–154 (RPGHT), and E174 contribute to the D-ribulose 5-phosphate site. Residue E38 participates in Mg(2+) binding. Mg(2+) is bound at residue H153.

Belongs to the DHBP synthase family. Homodimer. Mg(2+) serves as cofactor. It depends on Mn(2+) as a cofactor.

It catalyses the reaction D-ribulose 5-phosphate = (2S)-2-hydroxy-3-oxobutyl phosphate + formate + H(+). It participates in cofactor biosynthesis; riboflavin biosynthesis; 2-hydroxy-3-oxobutyl phosphate from D-ribulose 5-phosphate: step 1/1. Functionally, catalyzes the conversion of D-ribulose 5-phosphate to formate and 3,4-dihydroxy-2-butanone 4-phosphate. This is 3,4-dihydroxy-2-butanone 4-phosphate synthase from Chloroherpeton thalassium (strain ATCC 35110 / GB-78).